Reading from the N-terminus, the 787-residue chain is Replication origin-binding protein (787 aa).

Positions 39–195 constitute a Helicase ATP-binding domain; that stretch reads HFKTFSEQIK…SLCMPHFKSA (157 aa). 52 to 59 contributes to the ATP binding site; it reads APMGSGKT.

It belongs to the herpesviridae OriBP family.

Its function is as follows. Probably involved in DNA replication. Binds the origin of replication (ori). This Human herpesvirus 7 (strain JI) (HHV-7) protein is Replication origin-binding protein (U73).